Reading from the N-terminus, the 763-residue chain is Phosphoglycerol transferase I (763 aa).

A run of 4 helical transmembrane segments spans residues 1–21, 24–44, 77–97, and 108–128; these read MSEL…AWKA, NTWW…LNIT, ILPG…LGWI, and VGYS…SPAF.

It belongs to the OpgB family.

The protein resides in the cell inner membrane. It catalyses the reaction a phosphatidylglycerol + a membrane-derived-oligosaccharide D-glucose = a 1,2-diacyl-sn-glycerol + a membrane-derived-oligosaccharide 6-(glycerophospho)-D-glucose.. It participates in glycan metabolism; osmoregulated periplasmic glucan (OPG) biosynthesis. Functionally, transfers a phosphoglycerol residue from phosphatidylglycerol to the membrane-bound nascent glucan backbones. The chain is Phosphoglycerol transferase I from Salmonella arizonae (strain ATCC BAA-731 / CDC346-86 / RSK2980).